The sequence spans 606 residues: UvrABC system protein C (606 aa).

Residues 18–96 (SQPGVYRMMN…IKSLNPRYNI (79 aa)) form the GIY-YIG domain. Positions 205–240 (TEVLKSITRKMHEAAEEQEYEQAALFRDQIQSLRKI) constitute a UVR domain.

It belongs to the UvrC family. As to quaternary structure, interacts with UvrB in an incision complex.

The protein resides in the cytoplasm. The UvrABC repair system catalyzes the recognition and processing of DNA lesions. UvrC both incises the 5' and 3' sides of the lesion. The N-terminal half is responsible for the 3' incision and the C-terminal half is responsible for the 5' incision. The sequence is that of UvrABC system protein C from Nitrosospira multiformis (strain ATCC 25196 / NCIMB 11849 / C 71).